A 445-amino-acid chain; its full sequence is Ubiquitin carboxyl-terminal hydrolase 11 (445 aa).

The region spanning 1–412 (NSARADLCVA…AAYVLFYQRQ (412 aa)) is the USP domain. The interval 127 to 194 (RPSSDDEDDG…GPSHWPQRAR (68 aa)) is disordered. Position 130 is a phosphoserine (Ser-130). Acidic residues predominate over residues 131–140 (DDEDDGDEKD). His-362 serves as the catalytic Nucleophile. The active-site Proton acceptor is the His-370. A disordered region spans residues 416-445 (RRLQPQPSSSDPPASPACGSPPNSEFMDVN). Positions 420-439 (PQPSSSDPPASPACGSPPNS) are enriched in low complexity. At Ser-430 the chain carries Phosphoserine.

It belongs to the peptidase C19 family. As to quaternary structure, monomer. Interacts with RANBP9/RANBPM. Interacts with BRCA2. Interacts with CHUK/IKKA. Interacts with NFKBIA. Associated component of the Polycomb group (PcG) multiprotein PRC1-like complex.

The protein localises to the nucleus. It localises to the cytoplasm. The protein resides in the chromosome. The enzyme catalyses Thiol-dependent hydrolysis of ester, thioester, amide, peptide and isopeptide bonds formed by the C-terminal Gly of ubiquitin (a 76-residue protein attached to proteins as an intracellular targeting signal).. In terms of biological role, protease that can remove conjugated ubiquitin from target proteins and polyubiquitin chains. Inhibits the degradation of target proteins by the proteasome. Cleaves preferentially 'Lys-6' and 'Lys-63'-linked ubiquitin chains. Has lower activity with 'Lys-11' and 'Lys-33'-linked ubiquitin chains, and extremely low activity with 'Lys-27', 'Lys-29' and 'Lys-48'-linked ubiquitin chains (in vitro). Plays a role in the regulation of pathways leading to NF-kappa-B activation. Plays a role in the regulation of DNA repair after double-stranded DNA breaks. Acts as a chromatin regulator via its association with the Polycomb group (PcG) multiprotein PRC1-like complex; may act by deubiquitinating components of the PRC1-like complex. Promotes cell proliferation by deubiquitinating phosphorylated E2F1. The sequence is that of Ubiquitin carboxyl-terminal hydrolase 11 (USP11) from Canis lupus familiaris (Dog).